Reading from the N-terminus, the 367-residue chain is Undecaprenyl-phosphate alpha-N-acetylglucosaminyl 1-phosphate transferase (367 aa).

9 helical membrane-spanning segments follow: residues 3–23, 45–65, 69–89, 129–149, 158–178, 187–207, 213–233, 242–262, and 318–338; these read LLTA…FIFL, GVIP…MFGL, YIPH…VGAM, WELV…WAAI, IDGL…LILW, MWCF…LGIL, VFMG…LLLE, ISPV…VAIM, and VPEW…GYCI.

Belongs to the glycosyltransferase 4 family. WecA subfamily. Mg(2+) serves as cofactor. The cofactor is Mn(2+).

The protein localises to the cell inner membrane. It catalyses the reaction di-trans,octa-cis-undecaprenyl phosphate + UDP-N-acetyl-alpha-D-glucosamine = N-acetyl-alpha-D-glucosaminyl-di-trans,octa-cis-undecaprenyl diphosphate + UMP. It functions in the pathway bacterial outer membrane biogenesis; LPS O-antigen biosynthesis. The protein operates within bacterial outer membrane biogenesis; enterobacterial common antigen biosynthesis. Inhibited by tunicamycin. Functionally, catalyzes the transfer of the GlcNAc-1-phosphate moiety from UDP-GlcNAc onto the carrier lipid undecaprenyl phosphate (C55-P), yielding GlcNAc-pyrophosphoryl-undecaprenyl (GlcNAc-PP-C55). This Salmonella typhimurium (strain LT2 / SGSC1412 / ATCC 700720) protein is Undecaprenyl-phosphate alpha-N-acetylglucosaminyl 1-phosphate transferase.